The primary structure comprises 358 residues: Methionine aminopeptidase 2 (358 aa).

Position 109 (His-109) interacts with substrate. Residues Asp-130, Asp-141, and His-210 each coordinate a divalent metal cation. Residue His-218 coordinates substrate. Residues Glu-243 and Glu-339 each contribute to the a divalent metal cation site.

Belongs to the peptidase M24A family. Methionine aminopeptidase eukaryotic type 2 subfamily. Co(2+) serves as cofactor. Zn(2+) is required as a cofactor. Requires Mn(2+) as cofactor. It depends on Fe(2+) as a cofactor.

The protein resides in the cytoplasm. It catalyses the reaction Release of N-terminal amino acids, preferentially methionine, from peptides and arylamides.. Functionally, cotranslationally removes the N-terminal methionine from nascent proteins. The N-terminal methionine is often cleaved when the second residue in the primary sequence is small and uncharged (Met-Ala-, Cys, Gly, Pro, Ser, Thr, or Val). This Encephalitozoon intestinalis (strain ATCC 50506) (Microsporidian parasite) protein is Methionine aminopeptidase 2.